The sequence spans 972 residues: uncharacterized protein (972 aa).

The signal sequence occupies residues 1–21 (MTNMILLSAVFLSLAILETHC). Residues 22–932 (ANHISTGIST…KELGEKLYHV (911 aa)) lie on the Extracellular side of the membrane. The tract at residues 892 to 912 (EPTVTTTTESPPPPTTTTRQI) is disordered. Residues 933-953 (LFFMGVLTVSVAGGVIILSFI) traverse the membrane as a helical segment. The Cytoplasmic portion of the chain corresponds to 954-972 (GCLIMRKMEDAPQKTKYSV).

Its subcellular location is the host membrane. This is an uncharacterized protein from Magallana gigas (Pacific oyster).